We begin with the raw amino-acid sequence, 300 residues long: 4-hydroxy-tetrahydrodipicolinate synthase (300 aa).

Residue T55 participates in pyruvate binding. Y143 acts as the Proton donor/acceptor in catalysis. K171 functions as the Schiff-base intermediate with substrate in the catalytic mechanism. Residue I211 coordinates pyruvate.

Belongs to the DapA family. As to quaternary structure, homotetramer; dimer of dimers.

It is found in the cytoplasm. It catalyses the reaction L-aspartate 4-semialdehyde + pyruvate = (2S,4S)-4-hydroxy-2,3,4,5-tetrahydrodipicolinate + H2O + H(+). Its pathway is amino-acid biosynthesis; L-lysine biosynthesis via DAP pathway; (S)-tetrahydrodipicolinate from L-aspartate: step 3/4. Functionally, catalyzes the condensation of (S)-aspartate-beta-semialdehyde [(S)-ASA] and pyruvate to 4-hydroxy-tetrahydrodipicolinate (HTPA). The polypeptide is 4-hydroxy-tetrahydrodipicolinate synthase (Mycobacterium leprae (strain Br4923)).